The chain runs to 207 residues: Proteasome subunit beta (207 aa).

Residues 1 to 9 (MSNKNTFEG) constitute a propeptide, removed in mature form; by autocatalysis. Thr-10 functions as the Nucleophile in the catalytic mechanism.

This sequence belongs to the peptidase T1B family. In terms of assembly, the 20S proteasome core is composed of 14 alpha and 14 beta subunits that assemble into four stacked heptameric rings, resulting in a barrel-shaped structure. The two inner rings, each composed of seven catalytic beta subunits, are sandwiched by two outer rings, each composed of seven alpha subunits. The catalytic chamber with the active sites is on the inside of the barrel. Has a gated structure, the ends of the cylinder being occluded by the N-termini of the alpha-subunits. Is capped at one or both ends by the proteasome regulatory ATPase, PAN.

It localises to the cytoplasm. It carries out the reaction Cleavage of peptide bonds with very broad specificity.. The formation of the proteasomal ATPase PAN-20S proteasome complex, via the docking of the C-termini of PAN into the intersubunit pockets in the alpha-rings, triggers opening of the gate for substrate entry. Interconversion between the open-gate and close-gate conformations leads to a dynamic regulation of the 20S proteasome proteolysis activity. Component of the proteasome core, a large protease complex with broad specificity involved in protein degradation. The protein is Proteasome subunit beta of Methanobrevibacter ruminantium (strain ATCC 35063 / DSM 1093 / JCM 13430 / OCM 146 / M1) (Methanobacterium ruminantium).